The following is a 119-amino-acid chain: Ribosome-binding factor A (119 aa).

It belongs to the RbfA family. Monomer. Binds 30S ribosomal subunits, but not 50S ribosomal subunits or 70S ribosomes.

Its subcellular location is the cytoplasm. Its function is as follows. One of several proteins that assist in the late maturation steps of the functional core of the 30S ribosomal subunit. Associates with free 30S ribosomal subunits (but not with 30S subunits that are part of 70S ribosomes or polysomes). Required for efficient processing of 16S rRNA. May interact with the 5'-terminal helix region of 16S rRNA. The protein is Ribosome-binding factor A of Coxiella burnetii (strain CbuG_Q212) (Coxiella burnetii (strain Q212)).